Here is a 67-residue protein sequence, read N- to C-terminus: DNA-directed RNA polymerase subunit omega (67 aa).

This sequence belongs to the RNA polymerase subunit omega family. In terms of assembly, the RNAP catalytic core consists of 2 alpha, 1 beta, 1 beta' and 1 omega subunit. When a sigma factor is associated with the core the holoenzyme is formed, which can initiate transcription.

The catalysed reaction is RNA(n) + a ribonucleoside 5'-triphosphate = RNA(n+1) + diphosphate. Functionally, promotes RNA polymerase assembly. Latches the N- and C-terminal regions of the beta' subunit thereby facilitating its interaction with the beta and alpha subunits. The polypeptide is DNA-directed RNA polymerase subunit omega (Delftia acidovorans (strain DSM 14801 / SPH-1)).